Here is a 160-residue protein sequence, read N- to C-terminus: Large ribosomal subunit protein eL21A (160 aa).

K32 participates in a covalent cross-link: Glycyl lysine isopeptide (Lys-Gly) (interchain with G-Cter in ubiquitin).

Belongs to the eukaryotic ribosomal protein eL21 family. Component of the large ribosomal subunit (LSU). Mature yeast ribosomes consist of a small (40S) and a large (60S) subunit. The 40S small subunit contains 1 molecule of ribosomal RNA (18S rRNA) and 33 different proteins (encoded by 57 genes). The large 60S subunit contains 3 rRNA molecules (25S, 5.8S and 5S rRNA) and 46 different proteins (encoded by 81 genes).

It is found in the cytoplasm. Functionally, component of the ribosome, a large ribonucleoprotein complex responsible for the synthesis of proteins in the cell. The small ribosomal subunit (SSU) binds messenger RNAs (mRNAs) and translates the encoded message by selecting cognate aminoacyl-transfer RNA (tRNA) molecules. The large subunit (LSU) contains the ribosomal catalytic site termed the peptidyl transferase center (PTC), which catalyzes the formation of peptide bonds, thereby polymerizing the amino acids delivered by tRNAs into a polypeptide chain. The nascent polypeptides leave the ribosome through a tunnel in the LSU and interact with protein factors that function in enzymatic processing, targeting, and the membrane insertion of nascent chains at the exit of the ribosomal tunnel. The sequence is that of Large ribosomal subunit protein eL21A from Saccharomyces cerevisiae (strain ATCC 204508 / S288c) (Baker's yeast).